Reading from the N-terminus, the 237-residue chain is Probable transcriptional regulatory protein Fjoh_2560 (237 aa).

This sequence belongs to the TACO1 family.

It is found in the cytoplasm. The protein is Probable transcriptional regulatory protein Fjoh_2560 of Flavobacterium johnsoniae (strain ATCC 17061 / DSM 2064 / JCM 8514 / BCRC 14874 / CCUG 350202 / NBRC 14942 / NCIMB 11054 / UW101) (Cytophaga johnsonae).